The sequence spans 119 residues: Large ribosomal subunit protein uL22c (119 aa).

Belongs to the universal ribosomal protein uL22 family. Part of the 50S ribosomal subunit.

The protein localises to the plastid. It is found in the chloroplast. Its function is as follows. This protein binds specifically to 23S rRNA. Functionally, the globular domain of the protein is located near the polypeptide exit tunnel on the outside of the subunit, while an extended beta-hairpin is found that lines the wall of the exit tunnel in the center of the 70S ribosome. The polypeptide is Large ribosomal subunit protein uL22c (rpl22) (Anthoceros angustus (Hornwort)).